Consider the following 53-residue polypeptide: ATP synthase protein 8 (53 aa).

The chain crosses the membrane as a helical span at residues 4 to 24 (MAPISWLLLFIIFSITFILFC).

Belongs to the ATPase protein 8 family. As to quaternary structure, F-type ATPases have 2 components, CF(1) - the catalytic core - and CF(0) - the membrane proton channel.

The protein resides in the mitochondrion membrane. Mitochondrial membrane ATP synthase (F(1)F(0) ATP synthase or Complex V) produces ATP from ADP in the presence of a proton gradient across the membrane which is generated by electron transport complexes of the respiratory chain. F-type ATPases consist of two structural domains, F(1) - containing the extramembraneous catalytic core and F(0) - containing the membrane proton channel, linked together by a central stalk and a peripheral stalk. During catalysis, ATP synthesis in the catalytic domain of F(1) is coupled via a rotary mechanism of the central stalk subunits to proton translocation. Part of the complex F(0) domain. Minor subunit located with subunit a in the membrane. The sequence is that of ATP synthase protein 8 (mt:ATPase8) from Drosophila mauritiana (Fruit fly).